The chain runs to 466 residues: Nuclear pore complex protein Nup50 (466 aa).

Basic and acidic residues predominate over residues 1 to 14 (MAKRVAEKELTDRN). Positions 1–22 (MAKRVAEKELTDRNWDEEDEVE) are disordered. The residue at position 8 (lysine 8) is an N6-acetyllysine. Phosphoserine is present on serine 52. Repeat 1 spans residues 76 to 77 (FG). Residues 76–302 (FGGSGGKPLE…FSAGSSSLFG (227 aa)) are 5 X 2 AA repeats of F-G. Lysine 82 carries the N6-acetyllysine modification. The stretch at 112–113 (FG) is repeat 2. Lysine 126 carries the N6-acetyllysine modification. Disordered stretches follow at residues 128–150 (ISSP…STAC) and 200–257 (LENG…AEKK). A compositionally biased stretch (polar residues) spans 131–150 (PKCNNSNQPPSSGPASSTAC). Residues 143-205 (GPASSTACPG…IEKQLENGGG (63 aa)) form a binding to CDKN1B region. Serine 208 carries the phosphoserine modification. Repeat unit 3 spans residues 225–226 (FG). Residues 225–235 (FGSTKLQQESP) show a composition bias toward polar residues. Phosphoserine is present on serine 234. The segment covering 241-257 (NKAEDTSEKVEFTAEKK) has biased composition (basic and acidic residues). Threonine 246 bears the Phosphothreonine mark. Residue serine 268 is modified to Phosphoserine. Repeat 4 spans residues 271–272 (FG). Position 294 is a phosphoserine (serine 294). Copy 5 of the repeat occupies 301 to 302 (FG). The tract at residues 316 to 343 (SAKASESPAGGGSSECRDGEEEENDEPP) is disordered. Residues 333–466 (DGEEEENDEP…HKILLEKKDA (134 aa)) form the RanBD1 domain. A Glycyl lysine isopeptide (Lys-Gly) (interchain with G-Cter in SUMO2) cross-link involves residue lysine 351. Lysine 448 bears the N6-acetyllysine mark.

In terms of assembly, does not interact with TPR. Interacts with Importin alpha-2, Importin beta, Importin beta-2, NUP153, Ran binding protein 7, CDKN1B and itself. Widely expressed at low levels. Highest in the developing neural tube and adult testes.

It localises to the nucleus. The protein resides in the nuclear pore complex. Its subcellular location is the nucleus membrane. Its function is as follows. Component of the nuclear pore complex that has a direct role in nuclear protein import. Actively displaces NLSs from importin-alpha, and facilitates disassembly of the importin-alpha:beta-cargo complex and importin recycling. Interacts with regulatory proteins of cell cycle progression including CDKN1B. This interaction is required for correct intracellular transport and degradation of CDKN1B. The sequence is that of Nuclear pore complex protein Nup50 (Nup50) from Mus musculus (Mouse).